A 114-amino-acid chain; its full sequence is Large ribosomal subunit protein bL19 (114 aa).

It belongs to the bacterial ribosomal protein bL19 family.

In terms of biological role, this protein is located at the 30S-50S ribosomal subunit interface and may play a role in the structure and function of the aminoacyl-tRNA binding site. The sequence is that of Large ribosomal subunit protein bL19 from Heliobacterium modesticaldum (strain ATCC 51547 / Ice1).